The chain runs to 158 residues: MSWTTPKKAILLAASAEGSTKLNAFDNALLKMGIGNVNLVKLSSVIPAYIEWIDELPKNIPVGMLLPTVYAHIESDEPGSTITAALGVGISEGNEGGLIYEYSGYCTKEEAEKMVHKMVEEGFKVRGWKLKEFKAAVAEITVKDRPVAAIAAVVMLPY.

Residue S44 is modified to Pyruvic acid (Ser).

Belongs to the PdaD family. Pyruvate is required as a cofactor.

The enzyme catalyses L-arginine + H(+) = agmatine + CO2. This is Pyruvoyl-dependent arginine decarboxylase from Thermococcus sibiricus (strain DSM 12597 / MM 739).